The sequence spans 554 residues: CTP synthase (554 aa).

Positions 1-265 (MTPLIFVTGG…DEIVVNQLKL (265 aa)) are amidoligase domain. Ser13 lines the CTP pocket. Ser13 is a binding site for UTP. Residues 14-19 (SLGKGI) and Asp71 contribute to the ATP site. Mg(2+)-binding residues include Asp71 and Glu139. Residues 146–148 (DIE), 186–191 (KTKPTQ), and Lys222 contribute to the CTP site. UTP is bound by residues 186–191 (KTKPTQ) and Lys222. Residues 292-545 (TIAVVGKYVD…IRAARERKAG (254 aa)) enclose the Glutamine amidotransferase type-1 domain. L-glutamine is bound at residue Gly353. Catalysis depends on Cys380, which acts as the Nucleophile; for glutamine hydrolysis. Residues 381–384 (YGMQ), Glu404, and Arg471 each bind L-glutamine. Residues His518 and Glu520 contribute to the active site.

It belongs to the CTP synthase family. As to quaternary structure, homotetramer.

The enzyme catalyses UTP + L-glutamine + ATP + H2O = CTP + L-glutamate + ADP + phosphate + 2 H(+). It carries out the reaction L-glutamine + H2O = L-glutamate + NH4(+). The catalysed reaction is UTP + NH4(+) + ATP = CTP + ADP + phosphate + 2 H(+). It functions in the pathway pyrimidine metabolism; CTP biosynthesis via de novo pathway; CTP from UDP: step 2/2. With respect to regulation, allosterically activated by GTP, when glutamine is the substrate; GTP has no effect on the reaction when ammonia is the substrate. The allosteric effector GTP functions by stabilizing the protein conformation that binds the tetrahedral intermediate(s) formed during glutamine hydrolysis. Inhibited by the product CTP, via allosteric rather than competitive inhibition. Catalyzes the ATP-dependent amination of UTP to CTP with either L-glutamine or ammonia as the source of nitrogen. Regulates intracellular CTP levels through interactions with the four ribonucleotide triphosphates. The chain is CTP synthase from Stenotrophomonas maltophilia (strain R551-3).